Here is a 287-residue protein sequence, read N- to C-terminus: Shikimate kinase (287 aa).

Residue 87–97 (PLASGLKSSSA) coordinates ATP.

It belongs to the GHMP kinase family. Archaeal shikimate kinase subfamily.

The protein resides in the cytoplasm. It carries out the reaction shikimate + ATP = 3-phosphoshikimate + ADP + H(+). Its pathway is metabolic intermediate biosynthesis; chorismate biosynthesis; chorismate from D-erythrose 4-phosphate and phosphoenolpyruvate: step 5/7. This Methanococcoides burtonii (strain DSM 6242 / NBRC 107633 / OCM 468 / ACE-M) protein is Shikimate kinase.